Here is a 696-residue protein sequence, read N- to C-terminus: Elongation factor G (696 aa).

Residues 10–290 enclose the tr-type G domain; sequence THFRNIGIAA…AVVDYLPSPL (281 aa). Residues 19 to 26, 89 to 93, and 143 to 146 contribute to the GTP site; these read AHIDAGKT, DTPGH, and NKMD.

It belongs to the TRAFAC class translation factor GTPase superfamily. Classic translation factor GTPase family. EF-G/EF-2 subfamily.

It localises to the cytoplasm. Functionally, catalyzes the GTP-dependent ribosomal translocation step during translation elongation. During this step, the ribosome changes from the pre-translocational (PRE) to the post-translocational (POST) state as the newly formed A-site-bound peptidyl-tRNA and P-site-bound deacylated tRNA move to the P and E sites, respectively. Catalyzes the coordinated movement of the two tRNA molecules, the mRNA and conformational changes in the ribosome. The polypeptide is Elongation factor G (Deinococcus geothermalis (strain DSM 11300 / CIP 105573 / AG-3a)).